A 591-amino-acid polypeptide reads, in one-letter code: V-type ATP synthase alpha chain (591 aa).

242-249 contacts ATP; sequence GPFGAGKT.

It belongs to the ATPase alpha/beta chains family.

It catalyses the reaction ATP + H2O + 4 H(+)(in) = ADP + phosphate + 5 H(+)(out). Functionally, produces ATP from ADP in the presence of a proton gradient across the membrane. The V-type alpha chain is a catalytic subunit. In Chlamydia pneumoniae (Chlamydophila pneumoniae), this protein is V-type ATP synthase alpha chain (atpA).